The chain runs to 132 residues: Small ribosomal subunit protein uS8c (132 aa).

It belongs to the universal ribosomal protein uS8 family. In terms of assembly, part of the 30S ribosomal subunit.

The protein localises to the plastid. It localises to the chloroplast. Functionally, one of the primary rRNA binding proteins, it binds directly to 16S rRNA central domain where it helps coordinate assembly of the platform of the 30S subunit. This chain is Small ribosomal subunit protein uS8c (rps8), found in Drimys granadensis.